Consider the following 162-residue polypeptide: Succinate dehydrogenase assembly factor 2, mitochondrial (162 aa).

The transit peptide at 1 to 35 directs the protein to the mitochondrion; that stretch reads MHNMFPALTKTLSLQGYKIINSQTGSAAWSCGRRW.

This sequence belongs to the SDHAF2 family. In terms of assembly, interacts with the flavoprotein subunit within the SDH catalytic dimer.

The protein localises to the mitochondrion matrix. In terms of biological role, plays an essential role in the assembly of succinate dehydrogenase (SDH), an enzyme complex (also referred to as respiratory complex II) that is a component of both the tricarboxylic acid (TCA) cycle and the mitochondrial electron transport chain, and which couples the oxidation of succinate to fumarate with the reduction of ubiquinone (coenzyme Q) to ubiquinol. Required for flavinylation (covalent attachment of FAD) of the flavoprotein subunit of the SDH catalytic dimer. In Saccharomyces cerevisiae (strain RM11-1a) (Baker's yeast), this protein is Succinate dehydrogenase assembly factor 2, mitochondrial.